We begin with the raw amino-acid sequence, 281 residues long: Sorbose reductase SOU1 (281 aa).

NADP(+) contacts are provided by I47, K74, and N119. Catalysis depends on proton donor residues S173 and Y188. 4 residues coordinate NADP(+): Y188, K192, I221, and T223. The active-site Lowers pKa of active site Tyr is the K192.

This sequence belongs to the short-chain dehydrogenases/reductases (SDR) family. In terms of assembly, homotetramer.

The catalysed reaction is D-sorbitol + NADP(+) = keto-L-sorbose + NADPH + H(+). It participates in carbohydrate degradation; L-sorbose degradation. Functionally, catalyzes the NADP dependent reduction of L-sorbose to D-glucitol. Can also convert fructose to mannitol, but less efficiently. The sequence is that of Sorbose reductase SOU1 (SOU1) from Candida albicans (strain SC5314 / ATCC MYA-2876) (Yeast).